The sequence spans 469 residues: uncharacterized protein (469 aa).

The stretch at 11-65 (LFISVAFSQESVEDLKRLLEEYKKKIQEIERRLEELEKAKKEEEKKKEAVALKPT) forms a coiled coil.

This is an uncharacterized protein from Aquifex aeolicus (strain VF5).